The following is a 104-amino-acid chain: Conantokin-P (104 aa).

The N-terminal stretch at 1-26 (MQLYTYLYLLVPLVTFHLILSTGTLA) is a signal peptide. A propeptide spanning residues 27-80 (HGGTLTERRSTDTTALKPEPVLLQKSDARSTDDNDKDRLTQMKRILKKRGNKAR) is cleaved from the precursor. The tract at residues 29–87 (GTLTERRSTDTTALKPEPVLLQKSDARSTDDNDKDRLTQMKRILKKRGNKARGEEEHSK) is disordered. Positions 52-66 (SDARSTDDNDKDRLT) are enriched in basic and acidic residues. A 4-carboxyglutamate mark is found at E83, E84, E90, E94, and E103. A divalent metal cation contacts are provided by E90 and E94. A disulfide bond links C91 and C104.

Belongs to the conotoxin B superfamily. As to expression, expressed by the venom duct.

Its subcellular location is the secreted. Functionally, conantokins inhibit N-methyl-D-aspartate (NMDA) receptors. This toxin has the highest potency for the NR2B/GRIN2B subunit, followed by NR2A/GRIN2A, NR2C/GRIN2C, and NR2D/GRIN2D subunits. This Conus purpurascens (Purple cone) protein is Conantokin-P.